The following is a 514-amino-acid chain: ATP synthase subunit alpha (514 aa).

170–177 (GDRQIGKT) contributes to the ATP binding site.

The protein belongs to the ATPase alpha/beta chains family. In terms of assembly, F-type ATPases have 2 components, CF(1) - the catalytic core - and CF(0) - the membrane proton channel. CF(1) has five subunits: alpha(3), beta(3), gamma(1), delta(1), epsilon(1). CF(0) has three main subunits: a(1), b(2) and c(9-12). The alpha and beta chains form an alternating ring which encloses part of the gamma chain. CF(1) is attached to CF(0) by a central stalk formed by the gamma and epsilon chains, while a peripheral stalk is formed by the delta and b chains.

Its subcellular location is the cell inner membrane. It catalyses the reaction ATP + H2O + 4 H(+)(in) = ADP + phosphate + 5 H(+)(out). Functionally, produces ATP from ADP in the presence of a proton gradient across the membrane. The alpha chain is a regulatory subunit. The chain is ATP synthase subunit alpha from Marinobacter nauticus (strain ATCC 700491 / DSM 11845 / VT8) (Marinobacter aquaeolei).